A 194-amino-acid chain; its full sequence is dCTP deaminase (194 aa).

Residues 110–115 (RSSLAR), D128, 136–138 (VLE), Y171, K178, and Q182 each bind dCTP. The Proton donor/acceptor role is filled by E138. The interval 169 to 194 (RPYNKRDNAKYKDQTSAVGSRISGEN) is disordered. Basic and acidic residues predominate over residues 170–181 (PYNKRDNAKYKD). Over residues 182 to 194 (QTSAVGSRISGEN) the composition is skewed to polar residues.

This sequence belongs to the dCTP deaminase family. Homotrimer.

It catalyses the reaction dCTP + H2O + H(+) = dUTP + NH4(+). It participates in pyrimidine metabolism; dUMP biosynthesis; dUMP from dCTP (dUTP route): step 1/2. Catalyzes the deamination of dCTP to dUTP. The polypeptide is dCTP deaminase (Marinomonas sp. (strain MWYL1)).